The following is a 271-amino-acid chain: uncharacterized protein (271 aa).

This is an uncharacterized protein from Mycobacterium tuberculosis (strain CDC 1551 / Oshkosh).